Consider the following 359-residue polypeptide: Alanine racemase (359 aa).

K35 acts as the Proton acceptor; specific for D-alanine in catalysis. N6-(pyridoxal phosphate)lysine is present on K35. R130 lines the substrate pocket. Y255 (proton acceptor; specific for L-alanine) is an active-site residue. M303 serves as a coordination point for substrate.

It belongs to the alanine racemase family. Pyridoxal 5'-phosphate is required as a cofactor.

It carries out the reaction L-alanine = D-alanine. It participates in amino-acid biosynthesis; D-alanine biosynthesis; D-alanine from L-alanine: step 1/1. Functionally, catalyzes the interconversion of L-alanine and D-alanine. May also act on other amino acids. The protein is Alanine racemase (alr) of Janthinobacterium sp. (strain Marseille) (Minibacterium massiliensis).